Consider the following 417-residue polypeptide: NADH-quinone oxidoreductase subunit D (417 aa).

It belongs to the complex I 49 kDa subunit family. As to quaternary structure, NDH-1 is composed of 14 different subunits. Subunits NuoB, C, D, E, F, and G constitute the peripheral sector of the complex.

Its subcellular location is the cell inner membrane. It carries out the reaction a quinone + NADH + 5 H(+)(in) = a quinol + NAD(+) + 4 H(+)(out). Functionally, NDH-1 shuttles electrons from NADH, via FMN and iron-sulfur (Fe-S) centers, to quinones in the respiratory chain. The immediate electron acceptor for the enzyme in this species is believed to be ubiquinone. Couples the redox reaction to proton translocation (for every two electrons transferred, four hydrogen ions are translocated across the cytoplasmic membrane), and thus conserves the redox energy in a proton gradient. The polypeptide is NADH-quinone oxidoreductase subunit D (Burkholderia ambifaria (strain MC40-6)).